Here is a 402-residue protein sequence, read N- to C-terminus: Sex hormone-binding globulin (402 aa).

A signal peptide spans 1–29 (MESRGPLATSRLLLLLLLLLLRHTRQGWA). An O-linked (GalNAc...) threonine glycan is attached at threonine 36. Laminin G-like domains lie at 45–217 (VHLS…LRSC) and 224–390 (GIFL…THSC). Intrachain disulfides connect cysteine 193–cysteine 217 and cysteine 362–cysteine 390. N-linked (GlcNAc...) asparagine glycosylation is found at asparagine 380 and asparagine 396.

In terms of assembly, homodimer. Variant Asn-356 contains one N-linked (GlcNAc...) at position 356. As to expression, isoform 1 and isoform 2 are present in liver and testis.

It localises to the secreted. In terms of biological role, functions as an androgen transport protein, but may also be involved in receptor mediated processes. Each dimer binds one molecule of steroid. Specific for 5-alpha-dihydrotestosterone, testosterone, and 17-beta-estradiol. Regulates the plasma metabolic clearance rate of steroid hormones by controlling their plasma concentration. The polypeptide is Sex hormone-binding globulin (Homo sapiens (Human)).